A 184-amino-acid polypeptide reads, in one-letter code: ATP synthase subunit b, chloroplastic (184 aa).

A helical transmembrane segment spans residues Leu-27–Leu-49.

This sequence belongs to the ATPase B chain family. In terms of assembly, F-type ATPases have 2 components, F(1) - the catalytic core - and F(0) - the membrane proton channel. F(1) has five subunits: alpha(3), beta(3), gamma(1), delta(1), epsilon(1). F(0) has four main subunits: a(1), b(1), b'(1) and c(10-14). The alpha and beta chains form an alternating ring which encloses part of the gamma chain. F(1) is attached to F(0) by a central stalk formed by the gamma and epsilon chains, while a peripheral stalk is formed by the delta, b and b' chains.

Its subcellular location is the plastid. It localises to the chloroplast thylakoid membrane. F(1)F(0) ATP synthase produces ATP from ADP in the presence of a proton or sodium gradient. F-type ATPases consist of two structural domains, F(1) containing the extramembraneous catalytic core and F(0) containing the membrane proton channel, linked together by a central stalk and a peripheral stalk. During catalysis, ATP synthesis in the catalytic domain of F(1) is coupled via a rotary mechanism of the central stalk subunits to proton translocation. Functionally, component of the F(0) channel, it forms part of the peripheral stalk, linking F(1) to F(0). The polypeptide is ATP synthase subunit b, chloroplastic (Ceratophyllum demersum (Rigid hornwort)).